Consider the following 288-residue polypeptide: Protoheme IX farnesyltransferase (288 aa).

A run of 9 helical transmembrane segments spans residues 8–28 (IIKP…FLLA), 35–55 (VNLF…ASIF), 75–95 (IAIG…LLIL), 105–125 (FLTI…YSLL), 130–150 (SVYS…IGYC), 161–181 (FILL…IGLV), 205–225 (INII…FFAG), 230–250 (NYLF…IKGF), and 265–285 (IFLF…IDYK).

The protein belongs to the UbiA prenyltransferase family. Protoheme IX farnesyltransferase subfamily.

It is found in the cell membrane. It catalyses the reaction heme b + (2E,6E)-farnesyl diphosphate + H2O = Fe(II)-heme o + diphosphate. It participates in porphyrin-containing compound metabolism; heme O biosynthesis; heme O from protoheme: step 1/1. In terms of biological role, converts heme B (protoheme IX) to heme O by substitution of the vinyl group on carbon 2 of heme B porphyrin ring with a hydroxyethyl farnesyl side group. In Wigglesworthia glossinidia brevipalpis, this protein is Protoheme IX farnesyltransferase.